Consider the following 288-residue polypeptide: Probable endonuclease 4 (288 aa).

Residues His-75, His-115, Glu-153, Asp-187, His-190, His-224, Asp-237, His-239, and Glu-269 each contribute to the Zn(2+) site.

The protein belongs to the AP endonuclease 2 family. Zn(2+) is required as a cofactor.

It catalyses the reaction Endonucleolytic cleavage to 5'-phosphooligonucleotide end-products.. In terms of biological role, endonuclease IV plays a role in DNA repair. It cleaves phosphodiester bonds at apurinic or apyrimidinic (AP) sites, generating a 3'-hydroxyl group and a 5'-terminal sugar phosphate. The polypeptide is Probable endonuclease 4 (Chlamydia trachomatis serovar A (strain ATCC VR-571B / DSM 19440 / HAR-13)).